The primary structure comprises 628 residues: EIN3-binding F-box protein 1 (628 aa).

Residues 61 to 109 enclose the F-box domain; sequence PVSIDVLPDECLFEIFRRLSGPQERSACAFVSKQWLTLVSSIRQKEIDV.

Part of a SCF (SKP1-cullin-F-box) protein ligase complex. Interacts with CUL1, SKP1A/ASK1, SKP1B/ASK2, ASK11, ASK12, ASK13, ASK18, EIN3, and EIL1. Ubiquitous.

The protein resides in the nucleus. Its pathway is protein modification; protein ubiquitination. Its function is as follows. Component of SCF(EBF1) E3 ubiquitin ligase complexes, which may mediate the ubiquitination and subsequent proteasomal degradation of target proteins (probably including EIN3 and EIL1). Regulator of the ethylene signaling cascade by modulating the stability of EIN3 and EIL1 proteins. Confers insensitivity to ethylene. This is EIN3-binding F-box protein 1 (EBF1) from Arabidopsis thaliana (Mouse-ear cress).